Consider the following 271-residue polypeptide: Phosphate import ATP-binding protein PstB (271 aa).

Positions 24-266 (MIGNDVSVYY…PDDQRTQDYI (243 aa)) constitute an ABC transporter domain. 56 to 63 (GPSGCGKS) is a binding site for ATP.

The protein belongs to the ABC transporter superfamily. Phosphate importer (TC 3.A.1.7) family. In terms of assembly, the complex is composed of two ATP-binding proteins (PstB), two transmembrane proteins (PstC and PstA) and a solute-binding protein (PstS).

It is found in the cell inner membrane. It carries out the reaction phosphate(out) + ATP + H2O = ADP + 2 phosphate(in) + H(+). Part of the ABC transporter complex PstSACB involved in phosphate import. Responsible for energy coupling to the transport system. The protein is Phosphate import ATP-binding protein PstB of Rhizobium meliloti (strain 1021) (Ensifer meliloti).